Here is a 280-residue protein sequence, read N- to C-terminus: MSRYDDLFARLDTAGEGAFVPFIMLSDPSPEEAFQIISTAIEAGADALELGVPFSDPVADGPTVAESHLRALDGGATVDSALEQIKRVRAAYPEVPIGMLIYGNVPFTRGLDRFYQEFAEAGADSILLPDVPVREGAPFSAAAAAAGIDPIYIAPANASEKTLEGVSAASKGYIYAISRDGVTGTERESSTDGLSAVVDNIKKFDGAPIFLGFGISSPQHVADAIAAGASGAITGSAITKIIASHCEGEHPNPSTIRDMDGLKKDLTEFISAMKAATKKV.

Catalysis depends on proton acceptor residues glutamate 49 and aspartate 60.

It belongs to the TrpA family. In terms of assembly, tetramer of two alpha and two beta chains.

It catalyses the reaction (1S,2R)-1-C-(indol-3-yl)glycerol 3-phosphate + L-serine = D-glyceraldehyde 3-phosphate + L-tryptophan + H2O. The protein operates within amino-acid biosynthesis; L-tryptophan biosynthesis; L-tryptophan from chorismate: step 5/5. Functionally, the alpha subunit is responsible for the aldol cleavage of indoleglycerol phosphate to indole and glyceraldehyde 3-phosphate. This Corynebacterium glutamicum (strain R) protein is Tryptophan synthase alpha chain.